We begin with the raw amino-acid sequence, 307 residues long: Homoserine kinase (307 aa).

ATP is bound at residue 85–95 (PLTRGLGSSAA).

It belongs to the GHMP kinase family. Homoserine kinase subfamily.

Its subcellular location is the cytoplasm. The enzyme catalyses L-homoserine + ATP = O-phospho-L-homoserine + ADP + H(+). Its pathway is amino-acid biosynthesis; L-threonine biosynthesis; L-threonine from L-aspartate: step 4/5. In terms of biological role, catalyzes the ATP-dependent phosphorylation of L-homoserine to L-homoserine phosphate. The chain is Homoserine kinase from Caldicellulosiruptor bescii (strain ATCC BAA-1888 / DSM 6725 / KCTC 15123 / Z-1320) (Anaerocellum thermophilum).